The chain runs to 1403 residues: Centrosomal protein of 162 kDa (1403 aa).

Residues 20-46 (LSDDSFENSNKTPRQPNEDNKEMKKKD) are disordered. A compositionally biased stretch (basic and acidic residues) spans 35 to 46 (PNEDNKEMKKKD). A phosphoserine mark is found at S160 and S163. 4 disordered regions span residues 169 to 243 (LHRY…MLAN), 256 to 292 (VGLS…SSGD), 306 to 348 (SLGD…ESDL), and 453 to 606 (NPSL…GGNR). Positions 178 to 208 (PAEDGCENESEQEELPETYSDDFEDAEDADD) are enriched in acidic residues. The span at 210-238 (LITKDEETHPKENSESGKDSFPKQEEEKT) shows a compositional bias: basic and acidic residues. A compositionally biased stretch (basic residues) spans 485–500 (PCKKARSTPSLPKRKP). 2 stretches are compositionally biased toward basic and acidic residues: residues 526–536 (LEKKTSKDNTK) and 571–585 (PHRE…RPED). A coiled-coil region spans residues 614–1124 (KRAQDAEEKW…QKERRMMLSR (511 aa)). Positions 1126–1147 (IPRSREETAAKRLKKDPNRGHG) are disordered. A compositionally biased stretch (basic and acidic residues) spans 1128–1144 (RSREETAAKRLKKDPNR). The stretch at 1174–1386 (EENYRLRSEL…LDVLRELHRQ (213 aa)) forms a coiled coil.

The protein belongs to the CEP162 family. Interacts with CPNE4. Interacts with alpha-tubulin. Interacts with CEP290.

It localises to the cytoplasm. It is found in the cytoskeleton. The protein localises to the microtubule organizing center. The protein resides in the centrosome. Its subcellular location is the centriole. It localises to the spindle. It is found in the nucleus. Required to promote assembly of the transition zone in primary cilia. Acts by specifically recognizing and binding the axonemal microtubule. Localizes to the distal ends of centrioles before ciliogenesis and directly binds to axonemal microtubule, thereby promoting and restricting transition zone formation specifically at the cilia base. Required to mediate CEP290 association with microtubules. The protein is Centrosomal protein of 162 kDa (Cep162) of Mus musculus (Mouse).